Here is a 213-residue protein sequence, read N- to C-terminus: MSKMAEEKAAAVGGLGGAGAADAAQQQQLAAGEAAAARVRPVETLLRAAPLGLCVAAMTVMLRNQQSNEYGAVAYSDLGGFKYLVYANGLCAAYSLVSAFYTAVPRPATVSRSWLVFLLDQVFTYLILAAGAAAAELLYLAYNGDKEVTWSEACGVFGSFCRQARTSVAITFGTVLCFILLSLISSYRLFSAYEAPPSSALGSKGVEIAAYPR.

At 1-41 (MSKMAEEKAAAVGGLGGAGAADAAQQQQLAAGEAAAARVRP) the chain is on the cytoplasmic side. A helical membrane pass occupies residues 42–62 (VETLLRAAPLGLCVAAMTVML). The Extracellular segment spans residues 63 to 83 (RNQQSNEYGAVAYSDLGGFKY). Residues 84 to 104 (LVYANGLCAAYSLVSAFYTAV) form a helical membrane-spanning segment. The Cytoplasmic segment spans residues 105–113 (PRPATVSRS). A helical membrane pass occupies residues 114 to 134 (WLVFLLDQVFTYLILAAGAAA). Over 135–166 (AELLYLAYNGDKEVTWSEACGVFGSFCRQART) the chain is Extracellular. Residues 167–187 (SVAITFGTVLCFILLSLISSY) form a helical membrane-spanning segment. Topologically, residues 188-213 (RLFSAYEAPPSSALGSKGVEIAAYPR) are cytoplasmic.

It belongs to the Casparian strip membrane proteins (CASP) family. In terms of assembly, homodimer and heterodimers.

Its subcellular location is the cell membrane. This Zea mays (Maize) protein is CASP-like protein 2A1.